The primary structure comprises 396 residues: Purine ribonucleoside efflux pump NepI (396 aa).

The Cytoplasmic segment spans residues 1 to 21 (MSEFIAENRGANAITRPNWSA). A helical transmembrane segment spans residues 22–42 (VFSVAFCVACLIIVEFLPVSL). At 43 to 54 (LTPMAQDLGISE) the chain is on the periplasmic side. A helical membrane pass occupies residues 55 to 75 (GVAGQSVTVTAFVAMFASLFI). Residues 76-85 (TQTIQATDRR) are Cytoplasmic-facing. A helical membrane pass occupies residues 86–106 (YVVILFAVLLTLSCLLVSFAN). Residue Ser-107 is a topological domain, periplasmic. A helical transmembrane segment spans residues 108 to 128 (FSLLLIGRACLGVALGGFWAI). Residues 129–147 (SASLTMRLVPPRTVPKALS) are Cytoplasmic-facing. A helical transmembrane segment spans residues 148-168 (VIFGAVSIALVIAAPLGSFLG). Over 169 to 175 (ELIGWRN) the chain is Periplasmic. A helical membrane pass occupies residues 176–196 (VFNAAAAMGVLCIFWIIKSLP). Topologically, residues 197 to 215 (SLPGEPSHQKQNTFRLLQR) are cytoplasmic. Residues 216 to 236 (PGVMAGMIAIFMSFAGQFAFF) form a helical membrane-spanning segment. Residues 237–255 (TYIRPVYMNLAGFGVDGLT) are Periplasmic-facing. A helical membrane pass occupies residues 256-276 (LVLLSFGIASFVGTSLSSFIL). At 277–281 (KRSVK) the chain is on the cytoplasmic side. Residues 282–302 (LALAGAPFVLALSALVLTLWG) traverse the membrane as a helical segment. The Periplasmic portion of the chain corresponds to 303-305 (SDK). The chain crosses the membrane as a helical span at residues 306-326 (IVATGVAIIWGLTFALIPVGW). Residues 327-343 (STWITRSLADQAEKAGS) lie on the Cytoplasmic side of the membrane. The chain crosses the membrane as a helical span at residues 344–364 (IQVAVIQLANTCGAAIGGYAL). Over 365-366 (DN) the chain is Periplasmic. Residues 367–387 (IGLTSPLMLSGTLMLLTALLV) traverse the membrane as a helical segment. Over 388–396 (TAKVKMKKS) the chain is Cytoplasmic.

It belongs to the major facilitator superfamily. DHA1 family. NepI (TC 2.A.1.2.26) subfamily.

The protein localises to the cell inner membrane. The catalysed reaction is inosine(in) + H(+)(out) = inosine(out) + H(+)(in). It catalyses the reaction guanosine(in) + H(+)(out) = guanosine(out) + H(+)(in). In terms of biological role, involved in the efflux of purine ribonucleosides, such as inosine and guanosine. The chain is Purine ribonucleoside efflux pump NepI from Escherichia coli O6:K15:H31 (strain 536 / UPEC).